Consider the following 385-residue polypeptide: Probable caffeine synthase 3 (385 aa).

Tyr-18, Cys-62, Asn-67, Asp-101, Leu-102, Ser-140, and Phe-141 together coordinate S-adenosyl-L-homocysteine. Residues Tyr-158, Gln-161, and Phe-162 each coordinate caffeine. Position 179 (Asn-179) interacts with Mg(2+). A caffeine-binding site is contributed by Thr-238. Residues Asp-261, Phe-263, and Asn-264 each contribute to the Mg(2+) site. Tyr-369 contacts caffeine.

Belongs to the methyltransferase superfamily. Type-7 methyltransferase family. It depends on Mg(2+) as a cofactor. In terms of tissue distribution, expressed in roots, stems, young and old leaves.

It participates in alkaloid biosynthesis. In terms of biological role, may be involved in the biosynthesis of caffeine. This is Probable caffeine synthase 3 from Coffea arabica (Arabian coffee).